The primary structure comprises 245 residues: Probable phosphatase YcdX (245 aa).

The Zn(2+) site is built by His-7, His-9, His-15, His-40, Glu-73, His-101, His-131, Asp-192, and His-194.

Belongs to the PHP family. As to quaternary structure, homotrimer. The cofactor is Zn(2+).

The sequence is that of Probable phosphatase YcdX from Escherichia coli O139:H28 (strain E24377A / ETEC).